The chain runs to 426 residues: 3-phosphoshikimate 1-carboxyvinyltransferase (426 aa).

The 3-phosphoshikimate site is built by Lys-22, Ser-23, and Arg-27. Lys-22 lines the phosphoenolpyruvate pocket. Phosphoenolpyruvate contacts are provided by Gly-96 and Arg-124. 3-phosphoshikimate is bound by residues Ser-170, Ser-171, Gln-172, Ser-198, Asp-314, Asn-337, and Lys-341. Phosphoenolpyruvate is bound at residue Gln-172. The active-site Proton acceptor is the Asp-314. Phosphoenolpyruvate-binding residues include Arg-345, Arg-387, and Lys-412.

It belongs to the EPSP synthase family. Monomer.

The protein localises to the cytoplasm. The catalysed reaction is 3-phosphoshikimate + phosphoenolpyruvate = 5-O-(1-carboxyvinyl)-3-phosphoshikimate + phosphate. It functions in the pathway metabolic intermediate biosynthesis; chorismate biosynthesis; chorismate from D-erythrose 4-phosphate and phosphoenolpyruvate: step 6/7. Catalyzes the transfer of the enolpyruvyl moiety of phosphoenolpyruvate (PEP) to the 5-hydroxyl of shikimate-3-phosphate (S3P) to produce enolpyruvyl shikimate-3-phosphate and inorganic phosphate. The chain is 3-phosphoshikimate 1-carboxyvinyltransferase from Shewanella piezotolerans (strain WP3 / JCM 13877).